The following is a 585-amino-acid chain: Zinc finger protein 732 (585 aa).

The region spanning 4 to 75 (LTFRDVAIEF…KIHETVAKHP (72 aa)) is the KRAB domain. The C2H2-type 1; degenerate zinc-finger motif lies at 141–163 (FQCNVHVKVFSTFSNSNQRRIRH). The C2H2-type 2; degenerate zinc-finger motif lies at 167–189 (KHFKECGKSFQKFSDLTQHQGIH). A C2H2-type 3; degenerate zinc finger spans residues 195–217 (YTCEECGKDFKWYLIFNEYEIIH). The C2H2-type 4 zinc finger occupies 223 to 244 (FTCEECGNIFTTSSNFAKHKVH). The C2H2-type 5; degenerate zinc finger occupies 250 to 272 (YKYEECGKAFNRSSTLTKHKRIH). C2H2-type zinc fingers lie at residues 278 to 300 (FTCEECGKIITSSSNVAKHKKIH), 306 to 328 (YKCQECGKVFNRSTTLTKHNRIH), 334 to 356 (YTCEECGKAFSRSSVLNEHKRIH), 362 to 384 (YKCEQCGKAFRQSATLNKHKSIH), 390 to 412 (YTCEECGKAFSRFTTLNEHKRIH), 418 to 440 (HKCEECGKAFGWSTDLNKHKIIH), 446 to 468 (YKCEECGKAFGWSAYLSKHKKIH), 474 to 496 (YRCEECGKAFLCSRALNKHKTIH), and 502 to 524 (YECEECGKAFGWSTYLSKHKKIH). The C2H2-type 15; degenerate zinc-finger motif lies at 530–552 (YRCEECGKAFRRSRVLNKYKTIH). The C2H2-type 16; degenerate zinc-finger motif lies at 558-580 (PKCKGCGKAFKWSSYLNQHNKIY).

It belongs to the krueppel C2H2-type zinc-finger protein family.

Its subcellular location is the nucleus. Functionally, may be involved in transcriptional regulation. This is Zinc finger protein 732 (ZNF732) from Homo sapiens (Human).